Reading from the N-terminus, the 700-residue chain is Elongation factor G 1 (700 aa).

Residues 8–290 enclose the tr-type G domain; sequence ERYRNIGISA…AVIDYLPSPA (283 aa). Residues 17-24, 88-92, and 142-145 each bind GTP; these read AHIDAGKT, DTPGH, and NKMD.

It belongs to the TRAFAC class translation factor GTPase superfamily. Classic translation factor GTPase family. EF-G/EF-2 subfamily.

It is found in the cytoplasm. Functionally, catalyzes the GTP-dependent ribosomal translocation step during translation elongation. During this step, the ribosome changes from the pre-translocational (PRE) to the post-translocational (POST) state as the newly formed A-site-bound peptidyl-tRNA and P-site-bound deacylated tRNA move to the P and E sites, respectively. Catalyzes the coordinated movement of the two tRNA molecules, the mRNA and conformational changes in the ribosome. In Bordetella bronchiseptica (strain ATCC BAA-588 / NCTC 13252 / RB50) (Alcaligenes bronchisepticus), this protein is Elongation factor G 1.